The following is a 487-amino-acid chain: Glutamate--tRNA ligase (487 aa).

The short motif at 11–21 (PSPTGYPHLGN) is the 'HIGH' region element. 4 residues coordinate Zn(2+): Cys-108, Cys-110, Cys-135, and Asp-137. The 'KMSKS' region motif lies at 245–249 (KLSKR). Lys-248 is an ATP binding site.

It belongs to the class-I aminoacyl-tRNA synthetase family. Glutamate--tRNA ligase type 1 subfamily. As to quaternary structure, monomer. It depends on Zn(2+) as a cofactor.

The protein localises to the cytoplasm. The enzyme catalyses tRNA(Glu) + L-glutamate + ATP = L-glutamyl-tRNA(Glu) + AMP + diphosphate. Functionally, catalyzes the attachment of glutamate to tRNA(Glu) in a two-step reaction: glutamate is first activated by ATP to form Glu-AMP and then transferred to the acceptor end of tRNA(Glu). This is Glutamate--tRNA ligase from Dehalococcoides mccartyi (strain ATCC BAA-2100 / JCM 16839 / KCTC 5957 / BAV1).